The following is a 168-amino-acid chain: Ribosome maturation factor RimM (168 aa).

A PRC barrel domain is found at 97–168 (PNEYYYYELL…RLVVKVPEWI (72 aa)).

It belongs to the RimM family. As to quaternary structure, binds ribosomal protein uS19.

The protein resides in the cytoplasm. Its function is as follows. An accessory protein needed during the final step in the assembly of 30S ribosomal subunit, possibly for assembly of the head region. Essential for efficient processing of 16S rRNA. May be needed both before and after RbfA during the maturation of 16S rRNA. It has affinity for free ribosomal 30S subunits but not for 70S ribosomes. This is Ribosome maturation factor RimM from Pseudothermotoga lettingae (strain ATCC BAA-301 / DSM 14385 / NBRC 107922 / TMO) (Thermotoga lettingae).